A 432-amino-acid chain; its full sequence is Malate dehydrogenase [NADP], chloroplastic (432 aa).

Residues 1–40 constitute a chloroplast transit peptide; it reads MGLSTVYSPAGPRLVPAPLGRCRSAQPRRPRRAPLATVRC. The interval 18–37 is disordered; the sequence is PLGRCRSAQPRRPRRAPLAT. Cysteines 67 and 72 form a disulfide. Residue 96–102 participates in NADP(+) binding; it reads GAAGMIS. 2 residues coordinate substrate: Arg-177 and Arg-183. An NADP(+)-binding site is contributed by Asn-190. Residue Gln-197 participates in NAD(+) binding. An NADP(+)-binding site is contributed by 214-216; it reads VGN. Substrate-binding residues include Asn-216 and Arg-247. The active-site Proton acceptor is the His-272. The cysteines at positions 408 and 420 are disulfide-linked.

This sequence belongs to the LDH/MDH superfamily. MDH type 2 family. Homodimer.

It localises to the plastid. It is found in the chloroplast. The catalysed reaction is (S)-malate + NADP(+) = oxaloacetate + NADPH + H(+). With respect to regulation, chloroplast NADP-MDH is activated upon illumination. In order to be enzymatically active, disulfide bridges on the protein must be reduced by thioredoxin which receives electrons from ferredoxin and the electron transport system of photosynthesis. Its function is as follows. The chloroplastic, NADP-dependent form is essential for the photosynthesis C4 cycle, which allows plants to circumvent the problem of photorespiration. In C4 plants, NADP-MDH activity acts to convert oxaloacetate to malate in chloroplasts of mesophyll cells for transport to the bundle sheath cells. The polypeptide is Malate dehydrogenase [NADP], chloroplastic (Zea mays (Maize)).